Consider the following 92-residue polypeptide: Small ribosomal subunit protein uS19c (92 aa).

It belongs to the universal ribosomal protein uS19 family.

The protein resides in the plastid. The protein localises to the chloroplast. Its function is as follows. Protein S19 forms a complex with S13 that binds strongly to the 16S ribosomal RNA. The chain is Small ribosomal subunit protein uS19c from Oltmannsiellopsis viridis (Marine flagellate).